Reading from the N-terminus, the 460-residue chain is MNMSLDPLVTGEVSHFVGIGGIGMSGLALVLRSQGKRVSGSDLKPNLQTQRLEASGISVFYGHRAENLQGVTRLVYSSAIQPDNPELLAARRGGVAVRHRAQVLAQLAEGYRMIGVSGTHGKTTTSSLIAVMLYHCGLDPTVVVGGEVDELGGNARLGSGPHLVAEVDESDGSLVLFSPEVAVVTNIEGDHLDHYANLEQIVEAFQQYANQARVVVGCLDCQAVRDRMPLTVSYSLDGHPQADYTADRVSFTAQGTTARVLERGEVLGELSLKLLGRHNLANALAAVAVGRYLGLSFEQIAAGLREFRGAHRRFERIGERDDIVFVDDYAHHPSEVRATLAAARLQGRRVVAVFQPHRYSRSQLLLDEFGTAFGDADAVVVTEIYAAGEANTLGVSGELVARRIAAHHPDVHFEATSDSLKRHLEAHLRPGDLALFLGAGNLNRIIPELLQRAEPPALAL.

Position 118–124 (118–124) interacts with ATP; it reads GTHGKTT.

The protein belongs to the MurCDEF family.

It is found in the cytoplasm. It carries out the reaction UDP-N-acetyl-alpha-D-muramate + L-alanine + ATP = UDP-N-acetyl-alpha-D-muramoyl-L-alanine + ADP + phosphate + H(+). It functions in the pathway cell wall biogenesis; peptidoglycan biosynthesis. Its function is as follows. Cell wall formation. In Gloeobacter violaceus (strain ATCC 29082 / PCC 7421), this protein is UDP-N-acetylmuramate--L-alanine ligase.